The chain runs to 353 residues: Rhodopsin (353 aa).

Over 1-36 the chain is Extracellular; sequence MNGTEGPYFYVPMVNTSGIVRSPYEYPQYYLVNPAA. Residues N2 and N15 are each glycosylated (N-linked (GlcNAc...) asparagine). Residues 37 to 61 form a helical membrane-spanning segment; the sequence is YARLGAYMFLLILVGFPINFLTLYV. Over 62–73 the chain is Cytoplasmic; the sequence is TIEHKKLRTPLN. A helical membrane pass occupies residues 74–96; the sequence is YILLNLAVADLFMVFGGFTTTMY. Over 97 to 110 the chain is Extracellular; it reads TSMHGYFVLGRLGC. The cysteines at positions 110 and 187 are disulfide-linked. The chain crosses the membrane as a helical span at residues 111-133; the sequence is NIEGFFATLGGEIALWSLVVLAI. A 'Ionic lock' involved in activated form stabilization motif is present at residues 134 to 136; sequence ERW. Residues 134–152 are Cytoplasmic-facing; that stretch reads ERWVVVCKPISNFRFGENH. The chain crosses the membrane as a helical span at residues 153-173; that stretch reads AIMGLAFTWLMALACAAPPLV. Residues 174–202 are Extracellular-facing; sequence GWSRYIPEGMQCSCGIDYYTRAEGFNNES. N-linked (GlcNAc...) asparagine glycosylation occurs at N200. Residues 203–224 traverse the membrane as a helical segment; sequence FVIYMFVCHFTVPLMVVFFCYG. At 225–252 the chain is on the cytoplasmic side; that stretch reads RLLCAVKEAAAAQQESETTQRAEREVTR. A helical membrane pass occupies residues 253–274; the sequence is MVIMMVVAFLVCWLPYASVAWW. The Extracellular portion of the chain corresponds to 275–286; it reads IFTHQGSEFGPV. The chain crosses the membrane as a helical span at residues 287 to 308; it reads FMTIPAFFAKSSSIYNPMIYIC. K296 is modified (N6-(retinylidene)lysine). Residues 309 to 353 lie on the Cytoplasmic side of the membrane; it reads LNKQFRHCMITTLCCGKNPFEEEEGASTASKTEASSVSSSSVSPA. Residues C322 and C323 are each lipidated (S-palmitoyl cysteine). The tract at residues 331–353 is disordered; that stretch reads EEGASTASKTEASSVSSSSVSPA. The span at 334–353 shows a compositional bias: low complexity; sequence ASTASKTEASSVSSSSVSPA.

The protein belongs to the G-protein coupled receptor 1 family. Opsin subfamily. Phosphorylated on some or all of the serine and threonine residues present in the C-terminal region. Post-translationally, contains one covalently linked retinal chromophore.

The protein resides in the membrane. The protein localises to the cell projection. It localises to the cilium. It is found in the photoreceptor outer segment. Functionally, photoreceptor required for image-forming vision at low light intensity. While most salt water fish species use retinal as chromophore, most freshwater fish use 3-dehydroretinal, or a mixture of retinal and 3-dehydroretinal. Light-induced isomerization of 11-cis to all-trans retinal triggers a conformational change that activates signaling via G-proteins. Subsequent receptor phosphorylation mediates displacement of the bound G-protein alpha subunit by arrestin and terminates signaling. The polypeptide is Rhodopsin (rho) (Sarpa salpa (Salema)).